The primary structure comprises 312 residues: Acyl-CoA C20 Delta5-desaturase (312 aa).

2 helical membrane passes run 45 to 65 (VFHILFIGGLHVLCLFAPSTF) and 69 to 89 (SFWVCFALYAICGVFGTTLSF). 5 residues coordinate Fe cation: His90, His95, His127, His130, and His131. Positions 90–95 (HRNLTH) match the Histidine box-1 motif. A Histidine box-2 motif is present at residues 127–131 (HRYHH). A helical membrane pass occupies residues 193-213 (LQAALLYLFGGFPFIVWGMAV). Fe cation contacts are provided by His230, His259, His262, and His263. The short motif at 259–263 (HNNHH) is the Histidine box-3 element.

Belongs to the fatty acid desaturase type 1 family. Fe(2+) serves as cofactor.

It is found in the membrane. It catalyses the reaction (11Z,14Z)-eicosadienoyl-CoA + AH2 + O2 = (5Z,11Z,14Z)-eicosatrienoyl-CoA + A + 2 H2O. The catalysed reaction is (11Z,14Z,17Z)-eicosatrienoyl-CoA + AH2 + O2 = (5Z,11Z,14Z,17Z)-eicosatetraenoyl-CoA + A + 2 H2O. The protein operates within lipid metabolism; polyunsaturated fatty acid biosynthesis. Its function is as follows. Catalyzes the desaturation of 20:2Delta(11,14) and 20:3Delta(11,14,17) to generate sciadonic acid (20:3Delta(5,11,14)) and juniperonic acid (20:4Delta(5,11,14,17)). This Anemone leveillei (Windflower) protein is Acyl-CoA C20 Delta5-desaturase.